Here is a 258-residue protein sequence, read N- to C-terminus: Uroplakin-1a (258 aa).

Over 1–14 (MASAAAAEAEKGSP) the chain is Cytoplasmic. A helical transmembrane segment spans residues 15 to 35 (VVVGLLVVGNIIILLSGLSLF). Residues 36–59 (AETIWVTADQYRVYPLMGVSGKDD) lie on the Extracellular side of the membrane. Residues 60 to 86 (VFAGAWIAIFCGFSFFMVASFGVGAAL) form a helical membrane-spanning segment. Topologically, residues 87–91 (CRRRS) are cytoplasmic. The helical transmembrane segment at 92–112 (MVLTYLVLMLIVYIFECASCI) threads the bilayer. Topologically, residues 113 to 230 (TSYTHRDYMV…HIGHAIDSYT (118 aa)) are extracellular. Asn170 carries an N-linked (GlcNAc...) asparagine glycan. A helical transmembrane segment spans residues 231–252 (WGISWFGFAILMWTLPVMLIAM). Residues 253 to 258 (YFYTML) lie on the Cytoplasmic side of the membrane.

It belongs to the tetraspanin (TM4SF) family. Homodimer; disulfide-linked. Interacts with uroplakin-2 (UPK2). High expression restricted to ureteric urothelium (most superficial cells); low expression in prostate. Expression in normal urothelial cells is lost in culture. Some expression in tumor cell lines derived from urothelial malignancies.

The protein localises to the membrane. In terms of biological role, component of the asymmetric unit membrane (AUM); a highly specialized biomembrane elaborated by terminally differentiated urothelial cells. May play an important role in normal bladder epithelial physiology, possibly in regulating membrane permeability of superficial umbrella cells or in stabilizing the apical membrane through AUM/cytoskeletal interactions. The protein is Uroplakin-1a (UPK1A) of Homo sapiens (Human).